The chain runs to 1144 residues: Adenylate cyclase type 3 (1144 aa).

The Cytoplasmic segment spans residues 1–79 (MTEDQGFSDP…FKRQRHETLL (79 aa)). A run of 5 helical transmembrane segments spans residues 80–100 (VLVV…AVVF), 105–125 (LAPL…FVLC), 139–159 (VPYL…GLNF), 173–193 (AFFV…IVII), and 226–246 (ILAN…SYYM). Residues Asp-324, Ile-325, and Asp-368 each coordinate Mg(2+). ATP-binding positions include 324 to 329 (DIVGFT) and 366 to 368 (LGD). A helical membrane pass occupies residues 381 to 401 (EDHAVCSILMGLAMVEAISYV). At 402–630 (REKTKTGVDM…RYSVEKEKQS (229 aa)) the chain is on the cytoplasmic side. Arg-412 lines the ATP pocket. A Glycyl lysine isopeptide (Lys-Gly) (interchain with G-Cter in SUMO3) cross-link involves residue Lys-465. The tract at residues 504–563 (QNGLNGSALPNGAPASKPSSPALIETKEPNGSAHASGSTSEEAEEQEAQADNPSFPNPRR) is disordered. Ser-523 carries the phosphoserine modification. Residues 534 to 543 (GSAHASGSTS) show a composition bias toward low complexity. A Phosphoserine modification is found at Ser-578. The next 3 helical transmembrane spans lie at 631–651 (GAAF…EILI), 662–682 (FVVG…AIFP), and 706–726 (WAML…LSCL). Asn-734 carries an N-linked (GlcNAc...) asparagine glycan. Helical transmembrane passes span 755–775 (VAVL…MVKL), 777–797 (LMLL…CPVF), and 833–853 (LPLV…MLSF). Residues 854-1144 (YYFSRHVEKL…TLPHQVVDNP (291 aa)) lie on the Cytoplasmic side of the membrane. Residues Lys-975, 1062-1064 (DIW), and 1069-1073 (NVASR) contribute to the ATP site. Phosphoserine; by CaMK2 is present on Ser-1076. Lys-1109 contributes to the ATP binding site.

The protein belongs to the adenylyl cyclase class-4/guanylyl cyclase family. Requires Mg(2+) as cofactor. Mn(2+) serves as cofactor. Post-translationally, N-glycosylated. Sumoylated. Sumoylation is required for targeting ot olfactory cilia. In terms of processing, rapidly phosphorylated after stimulation by odorants or forskolin. Phosphorylation by CaMK2 at Ser-1076 down-regulates enzyme activity. In terms of tissue distribution, detected on cilia on the olfactory epithelium (at protein level). Detected on cilia on the olfactory epithelium.

The protein localises to the cell membrane. Its subcellular location is the golgi apparatus. It is found in the cell projection. It localises to the cilium. The protein resides in the cytoplasm. The catalysed reaction is ATP = 3',5'-cyclic AMP + diphosphate. Specifically activated by the G alpha protein GNAL/G(olf) in signaling cascades triggered by odorant receptors. Activated by forskolin. After forskolin treatment, activity is further increased by calcium/calmodulin. In the absence of forskolin, calcium/calmodulin has little effect on enzyme activity. Functionally, catalyzes the formation of the signaling molecule cAMP in response to G-protein signaling. Participates in signaling cascades triggered by odorant receptors via its function in cAMP biosynthesis: specifically activated by G alpha protein GNAL/G(olf) in olfactory epithelium. Required for the perception of odorants. Required for normal sperm motility and normal male fertility. Plays a role in regulating insulin levels and body fat accumulation in response to a high fat diet. The protein is Adenylate cyclase type 3 of Rattus norvegicus (Rat).